The chain runs to 63 residues: Kurtoxin-like II (63 aa).

In terms of domain architecture, LCN-type CS-alpha/beta spans 2 to 62 (IDGYPVDYWN…ARIKRSGRCR (61 aa)). 4 disulfide bridges follow: Cys12/Cys61, Cys16/Cys37, Cys23/Cys44, and Cys27/Cys46.

Belongs to the long (4 C-C) scorpion toxin superfamily. Sodium channel inhibitor family. Alpha subfamily. In terms of tissue distribution, expressed by the venom gland.

It is found in the secreted. This neurotoxin acts on sodium and calcium channels. Potently inhibits native voltage-gated T-type calcium channel activity in mouse male germ cells. Also binds Cav3.1/CACNA1G, Cav3.2/CACNA1H, and Cav3.3/CACNA1I T-type calcium channels and inhibits the channels by modifying voltage-dependent gating. In addition, binds and significantly inhibits the inactivation of activated sodium channels (Nav1.2/SCN2A and Nav1.5/SCN5A). This Parabuthus granulatus (Granulated thick-tailed scorpion) protein is Kurtoxin-like II.